A 183-amino-acid chain; its full sequence is MNKLIPVPREFFARDTNVVSTELIGKALYFQGKTAIITETESYIGQNDPACHAARGRTKRTDIMFGPAGFSYVYLIYGMYYCLNFVTEAKGFPAATLIRGVHVISPENLYLNGPGKLCKYLGINISHNKCDLINNNEFFVGDIGLKLPYSTTARIGITKGTDKLWRYVVTDITNLISQYNVQP.

It belongs to the DNA glycosylase MPG family.

The protein is Putative 3-methyladenine DNA glycosylase of Rickettsia africae (strain ESF-5).